The sequence spans 469 residues: Cysteine--tRNA ligase (469 aa).

Cysteine 33 contributes to the Zn(2+) binding site. The 'HIGH' region signature appears at 35-45; it reads ATVQGLPHIGH. The Zn(2+) site is built by cysteine 211, histidine 236, and glutamate 240. The 'KMSKS' region motif lies at 267–271; that stretch reads KMSKS. Residue lysine 270 coordinates ATP.

Belongs to the class-I aminoacyl-tRNA synthetase family. As to quaternary structure, monomer. The cofactor is Zn(2+).

It localises to the cytoplasm. The enzyme catalyses tRNA(Cys) + L-cysteine + ATP = L-cysteinyl-tRNA(Cys) + AMP + diphosphate. The polypeptide is Cysteine--tRNA ligase (cysS) (Mycobacterium tuberculosis (strain CDC 1551 / Oshkosh)).